We begin with the raw amino-acid sequence, 355 residues long: Probable butyrate kinase (355 aa).

The protein belongs to the acetokinase family.

Its subcellular location is the cytoplasm. The catalysed reaction is butanoate + ATP = butanoyl phosphate + ADP. This chain is Probable butyrate kinase, found in Listeria welshimeri serovar 6b (strain ATCC 35897 / DSM 20650 / CCUG 15529 / CIP 8149 / NCTC 11857 / SLCC 5334 / V8).